Consider the following 1512-residue polypeptide: MASAGPTGAGARPPKAFTAQAGLAKLVNPAGLNSILARGKEKFGGTQAWKELMGCDVIFARSISHWYGIKGTTYYELTVALGQPLYKPVTDPELTEEEKAVMTAVQSRFAQSNSSVVLTRTLLNKTCELKDRIRELTDELGQTEVHLAREKVKAAALKLENRKLFVENQELKDQLEKERTKHGWKGLKTLCLWIFLATLIGGYITGSNAACTLVDVPSPMKVGYDTFKQMCIHKDSYLPDGAFDKESLALECSKQMDYMDCKEVITDSISGKTSFAGMLRDVFRVDEIVTAIRTVVRFAMDFSLAYPICVMFVLILTRNKKHAIISACCALVAKCCGLRLLPFTLVLTYAPSETAIAGCIYGLGYISIPLVTFLHWVGLVLKAILVPDDCYIGTRVSHALAWSIMLPMWIITQELMAFTEFPLELQIVTTVVVCTAGFGFRYLTGTVTITEPDGTVKKYKRIFNAKSAIGTISTVFFEKAKAIRGVIPSFPSKADNIVKIEVDVDGGSAGVGFRLGNYIYTAGHVVGEAKIAKITWKGLTSQAKVLGHIELPLFTDTLARLEIPKPFQQLPVFRLAKSSENDYVQMVCFDNQLQNVVTFSGWANIDGDYLNAPFETYAGTSGSPIINRDGRMLGVHFGSNAVVSQGFVITRLFATEPAVKQCKSDEDLADEIVRKVMGGIRISFASLTSELEKQRDELNALKQMVNDLIDTDLVALEKKKGKTKRTVRGQKHKTKAISKAAFMKTKVLTEEEYRRLEEEGFTKDEIKDIVDNLREQAWLDYQNQLDEEGDDDWYEQMEEDQRINDQIDQNIERDLEDRGEWYGQRKITFKQRAMLRFIQLGRQQQVATVSFPDGYEDRAEELYNKVVTTEDLPEGETSEAALSLPNKIVHQAGKRLNFKHVKIHPDKTFMKSGVTQIEEKPEGDIILKAKTTTLAPKEEPVIQQVEQQPQVEQQQQPQQPVVEEKKRTPPPKPQRKPKTGAKAKCLDCGETFVERQDFHVCKSKKLNEPPSGGYTPVPDHLRWNNWQIYMEPLDLRITVPENYPILGHIAIDKLVERKKKVNDPLLKMLEQPKCEGFTSTTWTRKAYTKSFEKFDYGDAVDFVQDYPELTAFADAAVLAEVGYMEGTHVIPIQETSKNMDSTPAFPKMLDFDSERDYLEAHGMKEYIDTQLGVQSGKPLWWCFLKNEILKEKKVSEDDIRIITCSDPVITRLGASFDSEQNERMKERTETHHAQVGWTPFFGGLDKRVRRITSCGRTQVLELDWTRFDGTIPVQLFQRMRELRKFFLTRRSRRRYGKLLDWYNAQLTDRITLLPTGEVTHVKKGNPSGQFSTTVDNNLVNEWLTAFEFGYQHLENHGIIPTVRDYRANVDFLCYGDDRLLAFNPSFVNYDPQVTIDMYKNIFGMWVKPENIKLFDSPTGSSFCGFTLVKPHGQWVGVVNVNKLLQSLKTPTRRLPDLESLWGKLVSLKIMCYHSDPEAVSYLSNQIRRVEEYARAEGIELPEVGPDFYRKIW.

5 helical membrane passes run 190–210, 295–315, 323–343, 360–380, and 399–419; these read LCLW…SNAA, VVRF…FVLI, AIIS…LLPF, IYGL…VGLV, and ALAW…MAFT. Catalysis depends on charge relay system; for serine protease activity residues His524, Asp556, and Ser621. Tyr753 carries the O-(5'-phospho-RNA)-tyrosine modification. The disordered stretch occupies residues 940–981; sequence PVIQQVEQQPQVEQQQQPQQPVVEEKKRTPPPKPQRKPKTGA. The span at 941 to 961 shows a compositional bias: low complexity; the sequence is VIQQVEQQPQVEQQQQPQQPV. Residues 1257–1390 enclose the RdRp catalytic domain; sequence TQVLELDWTR…AFNPSFVNYD (134 aa).

It belongs to the astroviridae polyprotein 1AB family. As to quaternary structure, monomer. Cleaved by the viral and host proteases. The protease is probably autocatalytically cleaved.

It localises to the host membrane. The catalysed reaction is RNA(n) + a ribonucleoside 5'-triphosphate = RNA(n+1) + diphosphate. Functionally, responsible for the cleavage of the polyprotein into functional products. In terms of biological role, protein covalently attached to the 5' extremity of the genomic and subgenomic RNAs. It may serve as a primer for the replicase. The sequence is that of Non-structural polyprotein 1AB (ORF1) from Gallus gallus (Chicken).